The chain runs to 555 residues: Bifunctional epoxide hydrolase 2 (555 aa).

Residues Met1–Thr224 form a phosphatase region. Mg(2+) contacts are provided by Asp9 and Asp11. Lys43 carries the post-translational modification N6-acetyllysine. Thr123–Asn124 lines the phosphate pocket. Asp185 contacts Mg(2+). N6-acetyllysine occurs at positions 191 and 215. Residues Ser235 to Leu555 are epoxide hydrolase. Residues Pro259–Pro531 form the AB hydrolase-1 domain. The active-site Nucleophile is the Asp335. Residue Ser370 is modified to Phosphoserine. Tyr383 is a binding site for substrate. Lys455 is subject to N6-succinyllysine. Catalysis depends on Tyr466, which acts as the Proton donor. Lys505 carries the post-translational modification N6-succinyllysine. Cys522 is lipidated: S-(15-deoxy-Delta12,14-prostaglandin J2-9-yl)cysteine. His524 serves as the catalytic Proton acceptor. The short motif at Ser553 to Leu555 is the Microbody targeting signal element. Lys554 bears the N6-succinyllysine mark.

This sequence belongs to the AB hydrolase superfamily. Epoxide hydrolase family. As to quaternary structure, homodimer. It depends on Mg(2+) as a cofactor. Post-translationally, the covalent modification of cysteine by 15-deoxy-Delta12,14-prostaglandin-J2 is autocatalytic and reversible. It may occur as an alternative to other cysteine modifications, such as S-nitrosylation and S-palmitoylation.

It is found in the cytoplasm. It localises to the peroxisome. It carries out the reaction an epoxide + H2O = an ethanediol. The enzyme catalyses (9S,10S)-10-hydroxy-9-(phosphooxy)octadecanoate + H2O = (9S,10S)-9,10-dihydroxyoctadecanoate + phosphate. It catalyses the reaction (14R,15S)-epoxy-(5Z,8Z,11Z)-eicosatrienoate + H2O = (14R,15R)-dihydroxy-(5Z,8Z,11Z)-eicosatrienoate. Inhibited by 1-(1-acetylpiperidin-4-yl)-3-(4-(trifl uoromethoxy)phenyl)urea (TPAU), 1-cyclohexyl-3-dodecylurea (CDU), 12-(3-adamantan-1-yl-ureido)-dodecanoic acid (AUDA), 1-((3S, 5S, 7S)-adamantan-1-yl)-3-(5-(2-(2-ethoxyethoxy) ethoxy)pentyl)urea (AEPU), N-adamantyl-N[']-cyclohexyl urea (ACU), 4-(((1S, 4S)-4-(3-((3S, 5S, 7S)-adamantan-1-yl) ureido)cyclohexyl)oxy)benzoic acid (c-AUCB), 4-(((1R, 4R)-4-(3-((3S, 5S, 7S)-adamantan-1-yl)ureido)cyclohexyl)oxy)benzoic acid (t-AUCB), 4-(((1R, 4R)-4-(3-(4(trifluoromethoxy)phenyl)ureido)cyclohexyl)oxy)benzoic acid (t-TAUCB) and to a lesser extent by 8-(3-((3S, 5S, 7S)-adamantan-1-yl)ureido) octanoic acid (AUOA). Its function is as follows. Bifunctional enzyme. The C-terminal domain has epoxide hydrolase activity and acts on epoxides (alkene oxides, oxiranes) and arene oxides. Plays a role in xenobiotic metabolism by degrading potentially toxic epoxides. Also determines steady-state levels of physiological mediators. The N-terminal domain has lipid phosphatase activity, with the highest activity towards threo-9,10-phosphonooxy-hydroxy-octadecanoic acid, followed by erythro-9,10-phosphonooxy-hydroxy-octadecanoic acid, 12-phosphonooxy-octadec-9Z-enoic acid and 12-phosphonooxy-octadec-9E-enoic acid. This Sus scrofa (Pig) protein is Bifunctional epoxide hydrolase 2 (EPHX2).